The following is a 230-amino-acid chain: Ropporin-1-like protein (230 aa).

Residues 17-46 (PELPDILKQFTKAAIRTQPADVLRWSAGYF) enclose the RIIa domain.

It belongs to the ropporin family. As to quaternary structure, component of the axonemal radial spoke complex 1 (RS1), at least composed of spoke head proteins RSPH1, RSPH3, RSPH9 and the cilia-specific component RSPH4A or sperm-specific component RSPH6A, spoke stalk proteins RSPH14, DNAJB13, DYDC1, ROPN1L and NME5, and the anchor protein IQUB. Interacts with FSCB; the interaction increases upon spermatozoa capacitation conditions. May interact with AKAP3. Interacts with CFAP61. Sumoylated, sumoylation decreases upon spermatozoa capacitation conditions.

Its subcellular location is the cell projection. The protein localises to the cilium. The protein resides in the flagellum. Its function is as follows. Functions as part of axonemal radial spoke complexes that play an important part in the motility of sperm and cilia. Important for male fertility. With ROPN1, involved in fibrous sheath integrity and sperm motility, plays a role in PKA-dependent signaling processes required for spermatozoa capacitation. The protein is Ropporin-1-like protein (ROPN1L) of Homo sapiens (Human).